A 66-amino-acid chain; its full sequence is UPF0370 protein YpfN (66 aa).

A helical transmembrane segment spans residues 4 to 24 (LAKYWWILVIVFLVGVLLNVI). The tract at residues 39-66 (KPELPPHRDFNDKWDDDDDWPKKDQPKK) is disordered. A compositionally biased stretch (basic and acidic residues) spans 42–51 (LPPHRDFNDK).

Belongs to the UPF0370 family.

Its subcellular location is the cell membrane. This chain is UPF0370 protein YpfN, found in Escherichia coli O139:H28 (strain E24377A / ETEC).